Consider the following 267-residue polypeptide: Matrilysin (267 aa).

An N-terminal signal peptide occupies residues 1–20; that stretch reads MAAMRLTLFRIVCLLPGCLA. A propeptide spans 21–97 (activation peptide); sequence LPLSQEAGEV…PRCGVPDVAE (77 aa). The short motif at 88 to 95 is the Cysteine switch element; that stretch reads PRCGVPDV. Residue Cys-90 coordinates Zn(2+). Residue Asp-156 participates in Ca(2+) binding. Residues His-166 and Asp-168 each contribute to the Zn(2+) site. Positions 173, 174, 176, and 178 each coordinate Ca(2+). His-181 is a Zn(2+) binding site. Gly-188, Gly-190, and Asp-192 together coordinate Ca(2+). A Zn(2+)-binding site is contributed by His-194. The Ca(2+) site is built by Asp-196 and Glu-199. A Zn(2+)-binding site is contributed by His-217. Glu-218 is a catalytic residue. Zn(2+) contacts are provided by His-221 and His-227.

The protein belongs to the peptidase M10A family. Ca(2+) serves as cofactor. It depends on Zn(2+) as a cofactor.

The protein localises to the secreted. Its subcellular location is the extracellular space. It is found in the extracellular matrix. The enzyme catalyses Cleavage of 14-Ala-|-Leu-15 and 16-Tyr-|-Leu-17 in B chain of insulin. No action on collagen types I, II, IV, V. Cleaves gelatin chain alpha2(I) &gt; alpha1(I).. In terms of biological role, degrades casein, gelatins of types I, III, IV, and V, and fibronectin. Activates procollagenase. The protein is Matrilysin (Mmp7) of Rattus norvegicus (Rat).